Here is a 633-residue protein sequence, read N- to C-terminus: Putative serine/threonine-protein kinase L232 (633 aa).

A Protein kinase domain is found at 10 to 314 (YTIVDKLSEG…QSRKLFYEIL (305 aa)). Residues 16 to 24 (LSEGTYGIV) and Lys-39 each bind ATP. Asp-133 acts as the Proton acceptor in catalysis.

It belongs to the protein kinase superfamily. Ser/Thr protein kinase family.

The enzyme catalyses L-seryl-[protein] + ATP = O-phospho-L-seryl-[protein] + ADP + H(+). It catalyses the reaction L-threonyl-[protein] + ATP = O-phospho-L-threonyl-[protein] + ADP + H(+). This Acanthamoeba polyphaga mimivirus (APMV) protein is Putative serine/threonine-protein kinase L232.